Here is a 161-residue protein sequence, read N- to C-terminus: Lipid droplet assembly factor 1 (161 aa).

At 1 to 43 the chain is on the cytoplasmic side; sequence MAEEEPSSVSRDLQELQRKLGLLLESFQNNSKVVAFMKSPVGR. Residues 44–61 traverse the membrane as a helical segment; the sequence is FLDRHPFLVLTVLMFVTM. Residues 62 to 67 are Lumenal-facing; sequence SAIPVG. A helical membrane pass occupies residues 68-87; it reads FFLLIVVLTSLGALMGAILL. At 88 to 93 the chain is on the cytoplasmic side; it reads EGLVIS. A helical transmembrane segment spans residues 94–110; sequence VCGLSLLCILCGLGFVS. Residues 111–116 lie on the Lumenal side of the membrane; that stretch reads LALSGI. Residues 117–133 form a helical membrane-spanning segment; that stretch reads TMMSYVVVSCLMSYWFS. At 134–161 the chain is on the cytoplasmic side; that stretch reads PSRPPTQQHANIDSQLAMKFTESEKLGL.

It belongs to the LDAF1 family. In terms of assembly, interacts with BSCL2/seipin to form an oligomeric complex.

It localises to the endoplasmic reticulum membrane. Its subcellular location is the lipid droplet. Its function is as follows. Plays an important role in the formation of lipid droplets (LD) which are storage organelles at the center of lipid and energy homeostasis. In association with BSCL2/seipin, defines the sites of LD formation in the endoplasmic reticulum. The sequence is that of Lipid droplet assembly factor 1 from Rattus norvegicus (Rat).